The sequence spans 589 residues: Arginine--tRNA ligase (589 aa).

Positions 131 to 141 (ANPTGPLHVGH) match the 'HIGH' region motif.

This sequence belongs to the class-I aminoacyl-tRNA synthetase family. Monomer.

The protein resides in the cytoplasm. It carries out the reaction tRNA(Arg) + L-arginine + ATP = L-arginyl-tRNA(Arg) + AMP + diphosphate. This Legionella pneumophila (strain Paris) protein is Arginine--tRNA ligase.